The primary structure comprises 224 residues: Cerebellin-2 (224 aa).

A signal peptide spans 1-51 (MPAPGQGPRGPLLSMPGRRGALREPADFGSSLGAVLALLLLLLPACCPVRA). 2 N-linked (GlcNAc...) asparagine glycosylation sites follow: Asn53 and Asn110. One can recognise a C1q domain in the interval 88–224 (SGSAKVAFSA…TFSGFLVFPL (137 aa)).

As to quaternary structure, homohexamer; disulfide-linked homotrimers. The trimers are assembled via the globular C1q domains. The trimers associate via N-terminal cysteine residues to form disulfide-linked hexamers. May form homooligomers or heterooligomers with CBLN1 and CBLN3 prior to secretion. Once secreted, does not interact with other CBLN family members. Interacts with GRID2, and more weakly with GRID1. Interacts with NRXN1 and NRXN2 long and short isoforms produced by alternative promoter usage. Weakly interacts with NRXN3 short isoform and not at all with NRXN3 long isoform. Expressed in various brain regions with higher levels in the olfactory bulb, cerebral cortex, certain thalamic and hypothalamic nuclei, superior and inferior colliculi and some brainstem nuclei. Highly expressed in the dorsal medial habenula.

It is found in the secreted. Its function is as follows. Acts as a synaptic organizer in specific subsets of neurons in the brain. Essential for long-term maintenance but not establishment of excitatory synapses. Functions as part of a trans-synaptic complex by binding to postsynaptic GRID1 and presynaptic neurexins. This interaction helps regulate the activity of NMDA and AMPA receptors at hippocampal synapses without affecting synapse formation. NRXN1B-CBLN2-GRID1 complex transduce presynaptic signals into postsynaptic NMDAR response. NRXN3B-CBLN2-GRID1 complex transduce presynaptic signals into postsynaptic AMPAR response. This chain is Cerebellin-2 (Cbln2), found in Mus musculus (Mouse).